We begin with the raw amino-acid sequence, 102 residues long: Flagellar hook-basal body complex protein FliE 1 (102 aa).

This sequence belongs to the FliE family.

Its subcellular location is the bacterial flagellum basal body. The chain is Flagellar hook-basal body complex protein FliE 1 (fliE1) from Bradyrhizobium diazoefficiens (strain JCM 10833 / BCRC 13528 / IAM 13628 / NBRC 14792 / USDA 110).